Consider the following 251-residue polypeptide: Membrane-anchored junction protein (251 aa).

Topologically, residues 1 to 227 (MSLKPFTYPF…HSNPPPLKEP (227 aa)) are nuclear. Residues 140-225 (RKRKLMEEPS…LEHSNPPPLK (86 aa)) are disordered. Residues 183-198 (EDSQQDTPASDSTAVT) show a composition bias toward polar residues. Residues 228 to 246 (AARGFLGFLSALFPFRYFF) traverse the membrane as a helical segment. The Perinuclear space segment spans residues 247–251 (RKSTQ).

It belongs to the MAJIN family. In terms of assembly, component of the MAJIN-TERB1-TERB2 complex, composed of MAJIN, TERB1 and TERB2.

It localises to the nucleus inner membrane. It is found in the chromosome. Its subcellular location is the telomere. Meiosis-specific telomere-associated protein involved in meiotic telomere attachment to the nucleus inner membrane, a crucial step for homologous pairing and synapsis. Component of the MAJIN-TERB1-TERB2 complex, which promotes telomere cap exchange by mediating attachment of telomeric DNA to the inner nuclear membrane and replacement of the protective cap of telomeric chromosomes: in early meiosis, the MAJIN-TERB1-TERB2 complex associates with telomeric DNA and the shelterin/telosome complex. During prophase, the complex matures and promotes release of the shelterin/telosome complex from telomeric DNA. In the complex, MAJIN acts as the anchoring subunit to the nucleus inner membrane. MAJIN shows DNA-binding activity, possibly for the stabilization of telomere attachment on the nucleus inner membrane. The chain is Membrane-anchored junction protein from Rattus norvegicus (Rat).